The sequence spans 615 residues: Probable methylmalonyl-CoA mutase small subunit (615 aa).

It belongs to the methylmalonyl-CoA mutase family. As to quaternary structure, heterodimer of an alpha and a beta chain. It depends on adenosylcob(III)alamin as a cofactor.

It catalyses the reaction (R)-methylmalonyl-CoA = succinyl-CoA. Its pathway is metabolic intermediate metabolism; propanoyl-CoA degradation; succinyl-CoA from propanoyl-CoA: step 3/3. Functionally, catalyzes the isomerization of succinyl-CoA to methylmalonyl-CoA during synthesis of propionate from tricarboxylic acid-cycle intermediates. This chain is Probable methylmalonyl-CoA mutase small subunit (mutA), found in Mycobacterium bovis (strain ATCC BAA-935 / AF2122/97).